Here is a 287-residue protein sequence, read N- to C-terminus: Putative DNA-3-methyladenine glycosylase YfjP (287 aa).

Residue aspartate 242 is the Proton acceptor of the active site.

The protein belongs to the alkylbase DNA glycosidase AlkA family.

It catalyses the reaction Hydrolysis of alkylated DNA, releasing 3-methyladenine, 3-methylguanine, 7-methylguanine and 7-methyladenine.. Hydrolysis of the deoxyribose N-glycosidic bond to excise 3-methyladenine, 3-methylguanine, 7-methylguanine, O2-methylthymine, and O2-methylcytosine from the damaged DNA polymer formed by alkylation lesions. This Bacillus subtilis (strain 168) protein is Putative DNA-3-methyladenine glycosylase YfjP (yfjP).